Reading from the N-terminus, the 289-residue chain is uncharacterized protein (289 aa).

The next 9 helical transmembrane spans lie at 13-32 (INFA…LSGS), 37-59 (LIIS…HLND), 80-99 (IVTE…IFFI), 104-121 (EIAL…WLYS), 141-160 (VFTY…TIFS), 165-183 (VGVV…GFFL), 203-225 (VLSP…FVVI), 235-252 (TSSL…FAIY), and 265-287 (IISS…AIGC).

It localises to the cell membrane. This is an uncharacterized protein from Archaeoglobus fulgidus (strain ATCC 49558 / DSM 4304 / JCM 9628 / NBRC 100126 / VC-16).